Consider the following 1130-residue polypeptide: Tyrosine-protein kinase ABL1 (1130 aa).

The CAP stretch occupies residues 1–60; the sequence is MLEICLKLVGCKSKKGLSSSSSCYLEEALQRPVASDFEPQGLSEAARWNSKENLLAGPSE. Leu2 carries the N-myristoyl glycine lipid modification. Position 50 is a phosphoserine (Ser50). Residues 61–121 enclose the SH3 domain; sequence NDPNLFVALY…PSNYITPVNS (61 aa). Tyr70 is subject to Phosphotyrosine; by autocatalysis. 6 positions are modified to phosphotyrosine: Tyr115, Tyr128, Tyr139, Tyr172, Tyr185, and Tyr215. The SH2 domain maps to 127 to 217; the sequence is WYHGPVSRNA…GLITTLHYPA (91 aa). Tyr226 bears the Phosphotyrosine; by autocatalysis mark. Ser229 carries the post-translational modification Phosphoserine. The Protein kinase domain occupies 242–493; it reads ITMKHKLGGG…PSFAEIHQAF (252 aa). 248 to 256 is an ATP binding site; it reads LGGGQYGEV. 2 positions are modified to phosphotyrosine: Tyr253 and Tyr257. Residues Lys271 and 316–322 contribute to the ATP site; that span reads EFMTYGN. The Proton acceptor role is filled by Asp363. The Kinase activation loop signature appears at 381–405; that stretch reads DFGLSRLMTGDTYTAHAGAKFPIKW. Tyr393 bears the Phosphotyrosine; by autocatalysis and SRC-type Tyr-kinases mark. A Phosphotyrosine modification is found at Tyr413. A phosphoserine mark is found at Ser446, Ser559, and Ser569. Residues 518-996 are disordered; sequence AVSTLLQAPE…SASSALAGDQ (479 aa). Positions 537–566 are enriched in basic and acidic residues; the sequence is RAAEHRDTTDVPEMPHSKGQGESDPLDHEP. The span at 586–597 shows a compositional bias: basic and acidic residues; the sequence is EDERLLPKDKKT. Residues 605-609 carry the Nuclear localization signal 1 motif; the sequence is KKKKK. Residues Ser618 and Ser619 each carry the phosphoserine; by PAK2 modification. 3 positions are modified to phosphoserine: Ser620, Ser659, and Ser683. Positions 620 to 640 are enriched in basic and acidic residues; sequence SFREMDGQPERRGAGEEEGRD. A compositionally biased stretch (polar residues) spans 689–698; the sequence is KSSTLTSSRL. The Nuclear localization signal 2 signature appears at 709-715; the sequence is SSKRFLR. At Lys711 the chain carries N6-acetyllysine; by EP300. Ser718 is subject to Phosphoserine. A phosphothreonine mark is found at Thr735 and Thr751. A compositionally biased stretch (polar residues) spans 740–752; the sequence is LQSTGRQFDSSTF. Over residues 755-774 the composition is skewed to basic and acidic residues; the sequence is HKSEKPALPRKRAGENRSDQ. The Nuclear localization signal 3 signature appears at 762 to 769; sequence LPRKRAGE. Thr781 carries the phosphothreonine modification. A compositionally biased stretch (basic and acidic residues) spans 788–802; that stretch reads KKNEEAADEVFKDIM. Residues Thr814, Thr823, Thr844, and Thr852 each carry the phosphothreonine modification. Ser855 is modified (phosphoserine). The segment at 869–968 is DNA-binding; the sequence is PAEESRVRRH…VLPATPKPQS (100 aa). The segment covering 881 to 891 has biased composition (basic and acidic residues); the sequence is SSESPGRDKGK. Residues 905–915 show a composition bias toward low complexity; sequence ASAGKAGGKPS. The residue at position 917 (Ser917) is a Phosphoserine. Positions 953–1130 are F-actin-binding; the sequence is EGLKKPVLPA…VKEISDIVQR (178 aa). Residues 965-975 show a composition bias toward polar residues; that stretch reads KPQSAKPSGTP. Phosphoserine is present on Ser977. Over residues 984–993 the composition is skewed to low complexity; sequence TLPSASSALA. Positions 1090–1100 match the Nuclear export signal motif; sequence LENNLRELQIC.

It belongs to the protein kinase superfamily. Tyr protein kinase family. ABL subfamily. As to quaternary structure, interacts with SORBS1 following insulin stimulation. Found in a trimolecular complex containing CDK5 and CABLES1. Interacts with CABLES1 and PSTPIP1. Interacts with ZDHHC16, ITGB1 and HCK. Interacts with STX17; probably phosphorylates STX17. Interacts with INPPL1/SHIP2. Interacts with the 14-3-3 proteins, YWHAB, YWHAE, YWHAG, YWHAH, SFN and YWHAZ; the interaction with 14-3-3 proteins requires phosphorylation on Thr-735 and, sequesters ABL1 into the cytoplasm. Interacts with ABI1, ABI2, BCR, CRK, FGR, FYN, HCK, LYN, PSMA7 RAD9A, RAD51, RAD52, TP73 and WASF3. A complex made of ABL1, CTTN and MYLK regulates cortical actin-based cytoskeletal rearrangement critical to sphingosine 1-phosphate (S1P)-mediated endothelial cell (EC) barrier enhancement. Interacts (via SH3 domain) with CASP9; the interaction is direct and increases in the response of cells to genotoxic stress and ABL1/c-Abl activation. Found in a complex with ABL1, ABL2, CRK and UNC119; leading to the inhibition of CRK phosphorylation by ABL kinases. Interacts with TBX21. Interacts with NEDD9/HEF1; interaction is induced by CXCL12 promotion of ABL-mediated phosphorylation of NEDD9/HEF1. Mg(2+) serves as cofactor. In terms of processing, acetylated at Lys-711 by EP300 which promotes the cytoplasmic translocation. Phosphorylation at Tyr-70 by members of the SRC family of kinases disrupts SH3 domain-based autoinhibitory interactions and intermolecular associations, such as that with ABI1, and also enhances kinase activity. Phosphorylation at Tyr-226 and Tyr-393 correlate with increased activity. DNA damage-induced activation of ABL1 requires the function of ATM and Ser-446 phosphorylation. Phosphorylation at Ser-569 has been attributed to a CDC2-associated kinase and is coupled to cell division. Phosphorylation at Ser-618 and Ser-619 by PAK2 increases binding to CRK and reduces binding to ABI1. Phosphorylation on Thr-735 is required for binding 14-3-3 proteins for cytoplasmic translocation. Phosphorylated by PRKDC. Post-translationally, polyubiquitinated. Polyubiquitination of ABL1 leads to degradation. Widely expressed.

It localises to the cytoplasm. It is found in the cytoskeleton. The protein resides in the nucleus. Its subcellular location is the mitochondrion. The protein localises to the nucleus membrane. It catalyses the reaction L-tyrosyl-[protein] + ATP = O-phospho-L-tyrosyl-[protein] + ADP + H(+). Its activity is regulated as follows. Stabilized in the inactive form by an association between the SH3 domain and the SH2-TK linker region, interactions of the N-terminal cap, and contributions from an N-terminal myristoyl group and phospholipids. Activated by autophosphorylation as well as by SRC-family kinase-mediated phosphorylation. Activated by RIN1 binding to the SH2 and SH3 domains. Also stimulated by cell death inducers and DNA-damage. Phosphatidylinositol 4,5-bisphosphate (PIP2), a highly abundant phosphoinositide known to regulate cytoskeletal and membrane proteins, also inhibits the tyrosine kinase activity. Activated by 5-(1,3-diaryl-1H-pyrazol-4-yl)hydantoin, 5-[3-(4-fluorophenyl)-1-phenyl-1H-pyrazol-4-yl]-2,4-imidazolidinedione (DPH). Inhibited by ABI1, whose activity is controlled by ABL1 itself through tyrosine phosphorylation. Also inhibited by imatinib mesylate (Gleevec) which is used for the treatment of chronic myeloid leukemia (CML), and by VX-680, an inhibitor that also acts on imatinib-resistant mutants. In terms of biological role, non-receptor tyrosine-protein kinase that plays a role in many key processes linked to cell growth and survival such as cytoskeleton remodeling in response to extracellular stimuli, cell motility and adhesion, receptor endocytosis, autophagy, DNA damage response and apoptosis. Coordinates actin remodeling through tyrosine phosphorylation of proteins controlling cytoskeleton dynamics like WASF3 (involved in branch formation); ANXA1 (involved in membrane anchoring); DBN1, DBNL, CTTN, RAPH1 and ENAH (involved in signaling); or MAPT and PXN (microtubule-binding proteins). Phosphorylation of WASF3 is critical for the stimulation of lamellipodia formation and cell migration. Involved in the regulation of cell adhesion and motility through phosphorylation of key regulators of these processes such as BCAR1, CRK, CRKL, DOK1, EFS or NEDD9. Phosphorylates multiple receptor tyrosine kinases and more particularly promotes endocytosis of EGFR, facilitates the formation of neuromuscular synapses through MUSK, inhibits PDGFRB-mediated chemotaxis and modulates the endocytosis of activated B-cell receptor complexes. Other substrates which are involved in endocytosis regulation are the caveolin (CAV1) and RIN1. Moreover, ABL1 regulates the CBL family of ubiquitin ligases that drive receptor down-regulation and actin remodeling. Phosphorylation of CBL leads to increased EGFR stability. Involved in late-stage autophagy by regulating positively the trafficking and function of lysosomal components. ABL1 targets to mitochondria in response to oxidative stress and thereby mediates mitochondrial dysfunction and cell death. In response to oxidative stress, phosphorylates serine/threonine kinase PRKD2 at 'Tyr-717'. ABL1 is also translocated in the nucleus where it has DNA-binding activity and is involved in DNA-damage response and apoptosis. Many substrates are known mediators of DNA repair: DDB1, DDB2, ERCC3, ERCC6, RAD9A, RAD51, RAD52 or WRN. Activates the proapoptotic pathway when the DNA damage is too severe to be repaired. Phosphorylates TP73, a primary regulator for this type of damage-induced apoptosis. Phosphorylates the caspase CASP9 on 'Tyr-153' and regulates its processing in the apoptotic response to DNA damage. Phosphorylates PSMA7 that leads to an inhibition of proteasomal activity and cell cycle transition blocks. ABL1 also acts as a regulator of multiple pathological signaling cascades during infection. Several known tyrosine-phosphorylated microbial proteins have been identified as ABL1 substrates. This is the case of A36R of Vaccinia virus, Tir (translocated intimin receptor) of pathogenic E.coli and possibly Citrobacter, CagA (cytotoxin-associated gene A) of H.pylori, or AnkA (ankyrin repeat-containing protein A) of A.phagocytophilum. Pathogens can highjack ABL1 kinase signaling to reorganize the host actin cytoskeleton for multiple purposes, like facilitating intracellular movement and host cell exit. Finally, functions as its own regulator through autocatalytic activity as well as through phosphorylation of its inhibitor, ABI1. Regulates T-cell differentiation in a TBX21-dependent manner. Positively regulates chemokine-mediated T-cell migration, polarization, and homing to lymph nodes and immune-challenged tissues, potentially via activation of NEDD9/HEF1 and RAP1. Phosphorylates TBX21 on tyrosine residues leading to an enhancement of its transcriptional activator activity. This is Tyrosine-protein kinase ABL1 (ABL1) from Homo sapiens (Human).